A 573-amino-acid polypeptide reads, in one-letter code: Probable D-xylulose kinase A (573 aa).

Residues His97, Arg168, Asp284, and Asn285 each contribute to the substrate site. ATP contacts are provided by residues Trp366, 471–472 (GG), and Asn475.

It belongs to the FGGY kinase family.

It localises to the cytoplasm. The catalysed reaction is D-xylulose + ATP = D-xylulose 5-phosphate + ADP + H(+). Functionally, highly specific D-xylulose kinase which participates in the catabolism of xylose. Xylose is a major component of hemicelluloses such as xylan. Most fungi utilize D-xylose via three enzymatic reactions, xylose reductase (XR), xylitol dehydrogenase (XDH), and xylulokinase, to form xylulose 5-phosphate, which enters pentose phosphate pathway. The polypeptide is Probable D-xylulose kinase A (xkiA) (Neosartorya fischeri (strain ATCC 1020 / DSM 3700 / CBS 544.65 / FGSC A1164 / JCM 1740 / NRRL 181 / WB 181) (Aspergillus fischerianus)).